Reading from the N-terminus, the 339-residue chain is DNA-directed RNA polymerase subunit alpha (339 aa).

The interval 1–233 is alpha N-terminal domain (alpha-NTD); sequence MVREEVAGST…DLFLPFLHAE (233 aa). An alpha C-terminal domain (alpha-CTD) region spans residues 266–339; the sequence is GIPLNCIFID…MDLLKNKLSF (74 aa).

Belongs to the RNA polymerase alpha chain family. In terms of assembly, in plastids the minimal PEP RNA polymerase catalytic core is composed of four subunits: alpha, beta, beta', and beta''. When a (nuclear-encoded) sigma factor is associated with the core the holoenzyme is formed, which can initiate transcription.

It is found in the plastid. Its subcellular location is the chloroplast. It catalyses the reaction RNA(n) + a ribonucleoside 5'-triphosphate = RNA(n+1) + diphosphate. DNA-dependent RNA polymerase catalyzes the transcription of DNA into RNA using the four ribonucleoside triphosphates as substrates. This is DNA-directed RNA polymerase subunit alpha from Agrostis stolonifera (Creeping bentgrass).